We begin with the raw amino-acid sequence, 220 residues long: Guanylate kinase (220 aa).

The 180-residue stretch at glycine 15–lysine 194 folds into the Guanylate kinase-like domain. Serine 22–serine 29 lines the ATP pocket.

Belongs to the guanylate kinase family.

The protein localises to the cytoplasm. It carries out the reaction GMP + ATP = GDP + ADP. Its function is as follows. Essential for recycling GMP and indirectly, cGMP. This Rhizobium etli (strain ATCC 51251 / DSM 11541 / JCM 21823 / NBRC 15573 / CFN 42) protein is Guanylate kinase.